We begin with the raw amino-acid sequence, 582 residues long: Putative frv operon regulatory protein (582 aa).

A DNA-binding region (H-T-H motif) is located at residues proline 20–aspartate 39. The PTS EIIA type-2 domain occupies arginine 443–glycine 582. At histidine 505 the chain carries Phosphohistidine; by HPr.

Its function is as follows. Could be involved in the regulation of the transcription of the FRV operon. The protein is Putative frv operon regulatory protein (frvR) of Escherichia coli (strain K12).